The sequence spans 167 residues: uncharacterized protein (167 aa).

This is an uncharacterized protein from Acidianus convivator (ATV).